Reading from the N-terminus, the 257-residue chain is Imidazole glycerol phosphate synthase subunit hisF1 (257 aa).

Catalysis depends on residues D11 and D130.

This sequence belongs to the HisA/HisF family. As to quaternary structure, heterodimer of HisH and HisF.

It localises to the cytoplasm. The catalysed reaction is 5-[(5-phospho-1-deoxy-D-ribulos-1-ylimino)methylamino]-1-(5-phospho-beta-D-ribosyl)imidazole-4-carboxamide + L-glutamine = D-erythro-1-(imidazol-4-yl)glycerol 3-phosphate + 5-amino-1-(5-phospho-beta-D-ribosyl)imidazole-4-carboxamide + L-glutamate + H(+). Its pathway is amino-acid biosynthesis; L-histidine biosynthesis; L-histidine from 5-phospho-alpha-D-ribose 1-diphosphate: step 5/9. IGPS catalyzes the conversion of PRFAR and glutamine to IGP, AICAR and glutamate. The HisF subunit catalyzes the cyclization activity that produces IGP and AICAR from PRFAR using the ammonia provided by the HisH subunit. This chain is Imidazole glycerol phosphate synthase subunit hisF1 (hisF1), found in Vibrio vulnificus (strain YJ016).